Consider the following 450-residue polypeptide: Probable malate:quinone oxidoreductase (450 aa).

This sequence belongs to the MQO family. The cofactor is FAD.

It catalyses the reaction (S)-malate + a quinone = a quinol + oxaloacetate. It participates in carbohydrate metabolism; tricarboxylic acid cycle; oxaloacetate from (S)-malate (quinone route): step 1/1. This chain is Probable malate:quinone oxidoreductase, found in Helicobacter pylori (strain P12).